A 447-amino-acid chain; its full sequence is UDP-N-acetyl-alpha-D-muramoyl-L-alanyl-L-glutamate epimerase (447 aa).

This sequence belongs to the MurL family.

The enzyme catalyses UDP-N-acetyl-alpha-D-muramoyl-L-alanyl-L-glutamate + ATP + H2O = UDP-N-acetyl-alpha-D-muramoyl-L-alanyl-D-glutamate + AMP + diphosphate + H(+). The protein operates within cell wall biogenesis; peptidoglycan biosynthesis. Cell wall formation. Catalyzes epimerization of the terminal L-glutamate in UDP-N-acetyl-alpha-D-muramoyl-L-alanyl-L-glutamate. The sequence is that of UDP-N-acetyl-alpha-D-muramoyl-L-alanyl-L-glutamate epimerase from Micromonospora sp. (strain ATCC 39149 / NRRL 15099 / SCC 1413).